The primary structure comprises 285 residues: Cell division protein ZipA (285 aa).

Residue methionine 1 is a topological domain, periplasmic. A helical transmembrane segment spans residues 2 to 22 (EIGLREWLIVIGIVVIGGILF). The Cytoplasmic segment spans residues 23–285 (DGWRRMRGSK…FERRQLTHKR (263 aa)). The interval 49 to 88 (AVSENSELLGPSRSVDFPQGAGFEPDEENLPSLSVRGPSR) is disordered.

Belongs to the ZipA family. Interacts with FtsZ via their C-terminal domains.

The protein resides in the cell inner membrane. In terms of biological role, essential cell division protein that stabilizes the FtsZ protofilaments by cross-linking them and that serves as a cytoplasmic membrane anchor for the Z ring. Also required for the recruitment to the septal ring of downstream cell division proteins. The chain is Cell division protein ZipA from Azotobacter vinelandii (strain DJ / ATCC BAA-1303).